Here is a 357-residue protein sequence, read N- to C-terminus: UDP-N-acetylglucosamine--N-acetylmuramyl-(pentapeptide) pyrophosphoryl-undecaprenol N-acetylglucosamine transferase (357 aa).

UDP-N-acetyl-alpha-D-glucosamine is bound by residues 7-9, Asn119, Arg159, Ser187, Ile241, and Gln286; that span reads TGG.

This sequence belongs to the glycosyltransferase 28 family. MurG subfamily.

The protein resides in the cell inner membrane. It catalyses the reaction di-trans,octa-cis-undecaprenyl diphospho-N-acetyl-alpha-D-muramoyl-L-alanyl-D-glutamyl-meso-2,6-diaminopimeloyl-D-alanyl-D-alanine + UDP-N-acetyl-alpha-D-glucosamine = di-trans,octa-cis-undecaprenyl diphospho-[N-acetyl-alpha-D-glucosaminyl-(1-&gt;4)]-N-acetyl-alpha-D-muramoyl-L-alanyl-D-glutamyl-meso-2,6-diaminopimeloyl-D-alanyl-D-alanine + UDP + H(+). The protein operates within cell wall biogenesis; peptidoglycan biosynthesis. Its function is as follows. Cell wall formation. Catalyzes the transfer of a GlcNAc subunit on undecaprenyl-pyrophosphoryl-MurNAc-pentapeptide (lipid intermediate I) to form undecaprenyl-pyrophosphoryl-MurNAc-(pentapeptide)GlcNAc (lipid intermediate II). This Nitrosomonas europaea (strain ATCC 19718 / CIP 103999 / KCTC 2705 / NBRC 14298) protein is UDP-N-acetylglucosamine--N-acetylmuramyl-(pentapeptide) pyrophosphoryl-undecaprenol N-acetylglucosamine transferase.